A 453-amino-acid polypeptide reads, in one-letter code: MNIVILAAGTGKRMRSALPKVLHPLAGRPLLAHVIDTARTLNPTRLVVVVGHGADQVRTAVAASDVQFALQEQQLGTGHAVQQALPLLDPSAPTLVLYGDVPLTKASTLKRLTDAAGHDGYGVLTVTLDDPTGYGRIVRDAQGKVERIVEQKDATAEQQKIAEINTGIVVMPTKRLDGWLSSLKNENAQGEFYLTDVVELAIEAGIEVVTAQPDEEWETLGVNSKQQLAELERIHQRNVADDLLVAGVTIADPARIDVRGTLECGRDVSIDVNCVFEGKVTLGDNVSIGPNCVIRNATIGAGTRIDAYTHIEGAQVGAQAVLGPYARLRPGATLSDETHIGNFVEVKNAVLGHGSKANHLSYIGDSDVGARVNIGAGTITCNYDGANKFRTIIEDDVFVGSDTQLVAPVRVGRGVTIAAGTTVWKDVEEGLLVLNEKTQIGKTGYVRPTKKKS.

The interval 1–225 (MNIVILAAGT…EWETLGVNSK (225 aa)) is pyrophosphorylase. UDP-N-acetyl-alpha-D-glucosamine-binding positions include 6–9 (LAAG), Lys20, Gln71, 76–77 (GT), 98–100 (YGD), Gly135, Glu150, Asn165, and Asn223. Residue Asp100 coordinates Mg(2+). Asn223 lines the Mg(2+) pocket. The interval 226-246 (QQLAELERIHQRNVADDLLVA) is linker. Residues 247 to 453 (GVTIADPARI…GYVRPTKKKS (207 aa)) form an N-acetyltransferase region. Arg329 and Lys347 together coordinate UDP-N-acetyl-alpha-D-glucosamine. Catalysis depends on His359, which acts as the Proton acceptor. Positions 362 and 373 each coordinate UDP-N-acetyl-alpha-D-glucosamine. Acetyl-CoA contacts are provided by residues Ala376, 382–383 (NY), Ser401, and Ala419.

It in the N-terminal section; belongs to the N-acetylglucosamine-1-phosphate uridyltransferase family. This sequence in the C-terminal section; belongs to the transferase hexapeptide repeat family. Homotrimer. It depends on Mg(2+) as a cofactor.

It is found in the cytoplasm. It catalyses the reaction alpha-D-glucosamine 1-phosphate + acetyl-CoA = N-acetyl-alpha-D-glucosamine 1-phosphate + CoA + H(+). It carries out the reaction N-acetyl-alpha-D-glucosamine 1-phosphate + UTP + H(+) = UDP-N-acetyl-alpha-D-glucosamine + diphosphate. Its pathway is nucleotide-sugar biosynthesis; UDP-N-acetyl-alpha-D-glucosamine biosynthesis; N-acetyl-alpha-D-glucosamine 1-phosphate from alpha-D-glucosamine 6-phosphate (route II): step 2/2. The protein operates within nucleotide-sugar biosynthesis; UDP-N-acetyl-alpha-D-glucosamine biosynthesis; UDP-N-acetyl-alpha-D-glucosamine from N-acetyl-alpha-D-glucosamine 1-phosphate: step 1/1. It participates in bacterial outer membrane biogenesis; LPS lipid A biosynthesis. Functionally, catalyzes the last two sequential reactions in the de novo biosynthetic pathway for UDP-N-acetylglucosamine (UDP-GlcNAc). The C-terminal domain catalyzes the transfer of acetyl group from acetyl coenzyme A to glucosamine-1-phosphate (GlcN-1-P) to produce N-acetylglucosamine-1-phosphate (GlcNAc-1-P), which is converted into UDP-GlcNAc by the transfer of uridine 5-monophosphate (from uridine 5-triphosphate), a reaction catalyzed by the N-terminal domain. This chain is Bifunctional protein GlmU, found in Paraburkholderia phymatum (strain DSM 17167 / CIP 108236 / LMG 21445 / STM815) (Burkholderia phymatum).